A 480-amino-acid chain; its full sequence is MARAPPPLSSLPPPPRRPTVVLLLGLALAFCLAVLSIQSSFFTAPRLASRLDLDSDEVRALSGFQSRVQQCVARRGLGLTADIIDHCKLVLRFPKGTNSTWYNTQFKYFEPLEYNYDVCETILLWEQYRNMTTVLTREYLDVRPDGWLDYAAKRIAQLGADKCYNRTLCEELLSVLLPAKPPFHPRQFATCAVVGNSGDLLKTEFGQEIDAHDAVFRDNEAPVNKKYAKYVGLKRDFRLVVRGAARNMAPILKGSSDEVLIIKSLTHKEINAVIKELPNPVYLFQGIVLRRGAKGTGMKSIELALSMCDIIDMYGFTVDPNYTEWTRYFSPPRKGHNPLQGRAYYQLLECLGVIRIHSPMRAKRVEDWSDIPSREEIRTAHAAAFRLKRHETGQSDQMGPFSNCKVWGTVDPDYGPVSGTPDMSETRKSSNYKKWEVLPFDSLRMEAQEHHVQMGGVSLYKMDGNKLDDLVCVRHERSSS.

Residues 1 to 17 lie on the Cytoplasmic side of the membrane; that stretch reads MARAPPPLSSLPPPPRR. Residues 18–38 form a signal-anchor for type II membrane protein membrane-spanning segment; that stretch reads PTVVLLLGLALAFCLAVLSIQ. Residues 39-480 are Lumenal-facing; the sequence is SSFFTAPRLA…VCVRHERSSS (442 aa). Asparagine 98, asparagine 130, asparagine 165, and asparagine 321 each carry an N-linked (GlcNAc...) asparagine glycan.

The protein belongs to the glycosyltransferase 29 family.

Its subcellular location is the golgi apparatus membrane. Functionally, may possess sialyltransferase-like activity in vitro. This Oryza sativa subsp. japonica (Rice) protein is Sialyltransferase-like protein 5.